The chain runs to 262 residues: Short-chain reductase protein NovJ (262 aa).

NADP(+) is bound by residues 23–26 and 73–74; these read GAGR and DV. Position 152 (serine 152) interacts with substrate. Tyrosine 164 functions as the Proton acceptor in the catalytic mechanism. 164 to 168 lines the NADP(+) pocket; sequence YATAK.

The protein belongs to the short-chain dehydrogenases/reductases (SDR) family. As to quaternary structure, heterotetramer; the NovJ(2)K(2) heterotetramer is composed of subunits of 2 NovJ and 2 subunits of NovK.

It participates in antibiotic biosynthesis; novobiocin biosynthesis. Functionally, catalytic subunit of the NovJ(2)K(2) heterotetramer that catalyzes the NADPH-dependent reduction of the tyrosyl moiety of L-beta-OH-Tyr-S-NovH intermediate to yield the tethered beta-ketotyrosyl-S-NovH in the novobiocin biosynthesis pathway. Novobiocin is an aminocoumarin family antibiotic that targets bacterial DNA gyrases. This is Short-chain reductase protein NovJ (novJ) from Streptomyces niveus (Streptomyces spheroides).